A 73-amino-acid chain; its full sequence is Translation initiation factor IF-1 (73 aa).

The region spanning 1 to 73 is the S1-like domain; that stretch reads MAKKDGAIEV…SRGRIVYRYK (73 aa).

This sequence belongs to the IF-1 family. In terms of assembly, component of the 30S ribosomal translation pre-initiation complex which assembles on the 30S ribosome in the order IF-2 and IF-3, IF-1 and N-formylmethionyl-tRNA(fMet); mRNA recruitment can occur at any time during PIC assembly.

It is found in the cytoplasm. One of the essential components for the initiation of protein synthesis. Stabilizes the binding of IF-2 and IF-3 on the 30S subunit to which N-formylmethionyl-tRNA(fMet) subsequently binds. Helps modulate mRNA selection, yielding the 30S pre-initiation complex (PIC). Upon addition of the 50S ribosomal subunit IF-1, IF-2 and IF-3 are released leaving the mature 70S translation initiation complex. This chain is Translation initiation factor IF-1, found in Mycobacterium avium (strain 104).